A 469-amino-acid polypeptide reads, in one-letter code: Cytosolic beta-glucosidase (469 aa).

Glutamine 17, histidine 120, and asparagine 164 together coordinate substrate. The Proton donor role is filled by glutamate 165. Tyrosine 309 is a binding site for substrate. Glutamate 373 serves as the catalytic Nucleophile. Residues tryptophan 417 and 424–425 (EW) each bind substrate.

Belongs to the glycosyl hydrolase 1 family. Klotho subfamily. As to quaternary structure, may interact with NEU2. Post-translationally, the N-terminus is blocked. As to expression, present in small intestine (at protein level). Expressed in liver, small intestine, colon, spleen and kidney. Down-regulated in renal cell carcinomas and hepatocellular carcinomas.

It is found in the cytoplasm. The protein localises to the cytosol. The catalysed reaction is Hydrolysis of terminal, non-reducing beta-D-glucosyl residues with release of beta-D-glucose.. It carries out the reaction a beta-D-glucosyl-(1&lt;-&gt;1')-N-acylsphing-4-enine + H2O = an N-acylsphing-4-enine + D-glucose. It catalyses the reaction a beta-D-galactosyl-(1&lt;-&gt;1')-N-acylsphing-4-enine + H2O = an N-acylsphing-4-enine + D-galactose. The enzyme catalyses beta-D-glucosyl-(1&lt;-&gt;1)-sphing-4-enine + H2O = sphing-4-enine + D-glucose. The catalysed reaction is beta-D-glucosyl-(1&lt;-&gt;1)-N-octadecanoylsphing-4-enine + H2O = N-octadecanoylsphing-4-enine + D-glucose. It carries out the reaction beta-D-galactosyl-(1&lt;-&gt;1)-sphing-4-enine + H2O = sphing-4-enine + D-galactose. It catalyses the reaction beta-D-galactosyl-(1&lt;-&gt;1')-N-octadecanoylsphing-4-enine + H2O = N-octadecanoylsphing-4-enine + D-galactose. The enzyme catalyses a beta-D-xylosyl-(1&lt;-&gt;1')-N-acylsphing-4-enine + cholesterol = cholesteryl 3-beta-D-xyloside + an N-acylsphing-4-enine. Inhibited by 2,4-dinitrophenyl-2-fluoro-2-deoxy-beta-D-glucopyranoside. Inhibited by sodium taurocholate. Inhibited by alpha-1-C-nonyl-DIX/AnDIX. The glucosylceramidase activity is slightly inhibited by conduritol B epoxide/CBE while the galactosylceramidase activity is not. In terms of biological role, neutral cytosolic beta-glycosidase with a broad substrate specificity that could play a role in the catabolism of glycosylceramides. Has a significant glucosylceramidase activity in vitro. However, that activity is relatively low and its significance in vivo is not clear. Hydrolyzes galactosylceramides/GalCers, glucosylsphingosines/GlcSphs and galactosylsphingosines/GalSphs. However, the in vivo relevance of these activities is unclear. It can also hydrolyze a broad variety of dietary glycosides including phytoestrogens, flavonols, flavones, flavanones and cyanogens in vitro and could therefore play a role in the metabolism of xenobiotics. Possesses transxylosylase activity in vitro using xylosylated ceramides/XylCers (such as beta-D-xylosyl-(1&lt;-&gt;1')-N-acylsphing-4-enine) as xylosyl donors and cholesterol as acceptor. Could also play a role in the catabolism of cytosolic sialyl free N-glycans. This is Cytosolic beta-glucosidase from Homo sapiens (Human).